A 380-amino-acid polypeptide reads, in one-letter code: MMLGNMTFTQTILHELLRQHNMTKNEFIERFGLPPLVYVPELSPGAKTVTLVFYVIIFLAALLGNTLVVVVVWKNKVMRTTMNIFICSLAASDLLITIVCIPVTLMQNMLQNWIMGDFMCKLVPFIQTIAVASSILTLTGIAIERYYAIIHPLKVKYLLSKTRAGIILALVWVVSVGVATPMLFVHKAEEIHDFLYEQRFVTCQEKWWGQTQQTSYTIFNLVVLFIIPLLTMTSLYIRIAHRLWVQQPVGVTGNFAHGNSVRRKRQAVKMLVVVVLLFAVCWLPYHTVTVMNELTGLRLEEKSAKLLIAIVQLIAFSNSFNNPVVYAILNENFKKNFMTMLRCRVNRVSPQQVTPNTLQTPLEQSTRSCRLPAGAPNQQI.

At 1–51 (MMLGNMTFTQTILHELLRQHNMTKNEFIERFGLPPLVYVPELSPGAKTVTL) the chain is on the extracellular side. N-linked (GlcNAc...) asparagine glycans are attached at residues Asn5 and Asn21. Residues 52-72 (VFYVIIFLAALLGNTLVVVVV) traverse the membrane as a helical segment. At 73–83 (WKNKVMRTTMN) the chain is on the cytoplasmic side. Residues 84 to 104 (IFICSLAASDLLITIVCIPVT) form a helical membrane-spanning segment. Topologically, residues 105-122 (LMQNMLQNWIMGDFMCKL) are extracellular. Cys120 and Cys203 are oxidised to a cystine. A helical membrane pass occupies residues 123 to 143 (VPFIQTIAVASSILTLTGIAI). The Cytoplasmic segment spans residues 144-164 (ERYYAIIHPLKVKYLLSKTRA). Residues 165–185 (GIILALVWVVSVGVATPMLFV) form a helical membrane-spanning segment. The Extracellular segment spans residues 186 to 216 (HKAEEIHDFLYEQRFVTCQEKWWGQTQQTSY). Residues 217–237 (TIFNLVVLFIIPLLTMTSLYI) traverse the membrane as a helical segment. Residues 238–269 (RIAHRLWVQQPVGVTGNFAHGNSVRRKRQAVK) lie on the Cytoplasmic side of the membrane. Residues 270 to 290 (MLVVVVLLFAVCWLPYHTVTV) traverse the membrane as a helical segment. At 291–305 (MNELTGLRLEEKSAK) the chain is on the extracellular side. Residues 306-326 (LLIAIVQLIAFSNSFNNPVVY) traverse the membrane as a helical segment. The Cytoplasmic segment spans residues 327 to 380 (AILNENFKKNFMTMLRCRVNRVSPQQVTPNTLQTPLEQSTRSCRLPAGAPNQQI).

It belongs to the G-protein coupled receptor 1 family.

It is found in the cell membrane. In terms of biological role, receptor for QRFP-like peptide. The activity of this receptor is mediated by G proteins which activate a phosphatidyl-inositol-calcium second messenger system. The chain is QRFP-like peptide receptor from Branchiostoma floridae (Florida lancelet).